Here is a 319-residue protein sequence, read N- to C-terminus: RNA polymerase II holoenzyme cyclin-like subunit (319 aa).

In terms of domain architecture, Cyclin N-terminal spans 53–142 (QQLIRLAKRL…LGECEFFMIS (90 aa)). Positions 237–251 (QGQQAQGGMPEPAAA) are enriched in low complexity. The tract at residues 237–261 (QGQQAQGGMPEPAAAEPKEKRQQDR) is disordered. The segment covering 252–261 (EPKEKRQQDR) has biased composition (basic and acidic residues).

The protein belongs to the cyclin family. Cyclin C subfamily. In terms of assembly, component of the SRB8-11 complex, a regulatory module of the Mediator complex. Interacts with SSN3/FCK1.

It localises to the nucleus. In terms of biological role, component of the SRB8-11 complex. The SRB8-11 complex is a regulatory module of the Mediator complex which is itself involved in regulation of basal and activated RNA polymerase II-dependent transcription. The SRB8-11 complex may be involved in the transcriptional repression of a subset of genes regulated by Mediator. It may inhibit the association of the Mediator complex with RNA polymerase II to form the holoenzyme complex. The SRB8-11 complex phosphorylates the C-terminal domain (CTD) of the largest subunit of RNA polymerase II. May play a role in signal transduction pathways regulating secondary metabolism and fungal development (conidiation). The polypeptide is RNA polymerase II holoenzyme cyclin-like subunit (SSN8) (Gibberella moniliformis (Maize ear and stalk rot fungus)).